We begin with the raw amino-acid sequence, 458 residues long: Flavohemoprotein (458 aa).

One can recognise a Globin domain in the interval 2–158 (TLSEDTLRAV…LADLFIKREE (157 aa)). Heme b is bound at residue H107. Catalysis depends on charge relay system residues Y117 and E157. Residues 169-457 (GGWRQTRTFR…FEMFGPFKAS (289 aa)) are reductase. The 108-residue stretch at 172–279 (RQTRTFRVEE…APPYGDFFLR (108 aa)) folds into the FAD-binding FR-type domain. Residues Y211 and 228–231 (RQYS) each bind FAD. 321–326 (GIGQTP) lines the NADP(+) pocket. Position 450–453 (450–453 (MFGP)) interacts with FAD.

The protein belongs to the globin family. Two-domain flavohemoproteins subfamily. It in the C-terminal section; belongs to the flavoprotein pyridine nucleotide cytochrome reductase family. As to quaternary structure, monomer. Heme b serves as cofactor. The cofactor is FAD.

It catalyses the reaction 2 nitric oxide + NADPH + 2 O2 = 2 nitrate + NADP(+) + H(+). The enzyme catalyses 2 nitric oxide + NADH + 2 O2 = 2 nitrate + NAD(+) + H(+). Flavohemoprotein involved in nitric oxide (NO) detoxification in an aerobic process, termed nitric oxide dioxygenase (NOD) reaction that utilizes O(2) and NAD(P)H to convert NO to nitrate, which protects the protozoan parasite from various noxious nitrogen compounds. Therefore, plays a central role in the inducible response to nitrosative stress. May also be involved in O(2) detoxification. This Giardia intestinalis (strain ATCC 50803 / WB clone C6) (Giardia lamblia) protein is Flavohemoprotein (hmpA).